A 372-amino-acid chain; its full sequence is DNA-directed RNA polymerase subunit alpha (372 aa).

The tract at residues 1 to 268 is alpha N-terminal domain (alpha-NTD); it reads MIFDEDSNSI…DQFQPFINFD (268 aa). The segment at 280–372 is alpha C-terminal domain (alpha-CTD); it reads KDTLPYDSNL…ESLSKQYSEE (93 aa).

It belongs to the RNA polymerase alpha chain family. Homodimer. The RNAP catalytic core consists of 2 alpha, 1 beta, 1 beta' and 1 omega subunit. When a sigma factor is associated with the core the holoenzyme is formed, which can initiate transcription.

The enzyme catalyses RNA(n) + a ribonucleoside 5'-triphosphate = RNA(n+1) + diphosphate. Its function is as follows. DNA-dependent RNA polymerase catalyzes the transcription of DNA into RNA using the four ribonucleoside triphosphates as substrates. This chain is DNA-directed RNA polymerase subunit alpha, found in Ehrlichia chaffeensis (strain ATCC CRL-10679 / Arkansas).